Here is a 193-residue protein sequence, read N- to C-terminus: Cytidylate kinase (193 aa).

12 to 20 (GLAGSGTTT) is a binding site for ATP.

Belongs to the cytidylate kinase family. Type 2 subfamily.

Its subcellular location is the cytoplasm. It catalyses the reaction CMP + ATP = CDP + ADP. The catalysed reaction is dCMP + ATP = dCDP + ADP. This Thermococcus kodakarensis (strain ATCC BAA-918 / JCM 12380 / KOD1) (Pyrococcus kodakaraensis (strain KOD1)) protein is Cytidylate kinase.